The following is a 130-amino-acid chain: L-ectoine synthase (130 aa).

It belongs to the ectoine synthase family.

The enzyme catalyses (2S)-4-acetamido-2-aminobutanoate = L-ectoine + H2O. The protein operates within amine and polyamine biosynthesis; ectoine biosynthesis; L-ectoine from L-aspartate 4-semialdehyde: step 3/3. Catalyzes the circularization of gamma-N-acetyl-alpha,gamma-diaminobutyric acid (ADABA) to ectoine (1,4,5,6-tetrahydro-2-methyl-4-pyrimidine carboxylic acid), which is an excellent osmoprotectant. The chain is L-ectoine synthase from Desulfatibacillum aliphaticivorans.